Here is a 55-residue protein sequence, read N- to C-terminus: Spermatid nuclear transition protein 1 (55 aa).

The segment covering 1–42 has biased composition (basic residues); sequence MSTSRKLKSHGMRRGKNRAPHKGVKRGGSKRKYRKGSLKSRK. The segment at 1-55 is disordered; it reads MSTSRKLKSHGMRRGKNRAPHKGVKRGGSKRKYRKGSLKSRKRCDDANRNYRSHL. Ser9, Ser37, and Ser40 each carry phosphoserine.

The protein belongs to the nuclear transition protein 1 family. As to expression, testis.

The protein resides in the nucleus. It is found in the chromosome. Plays a key role in the replacement of histones to protamine in the elongating spermatids of mammals. In condensing spermatids, loaded onto the nucleosomes, where it promotes the recruitment and processing of protamines, which are responsible for histone eviction. This is Spermatid nuclear transition protein 1 (TNP1) from Sus scrofa (Pig).